Consider the following 397-residue polypeptide: Torsin-3A (397 aa).

A signal peptide spans 1 to 25; it reads MLRGPWRQLWLFFLLLLPGAPEPRG. N-linked (GlcNAc...) asparagine glycosylation is present at Asn122. Residue 167–174 coordinates ATP; it reads GWSGTGKN.

The protein belongs to the ClpA/ClpB family. Torsin subfamily. As to quaternary structure, may not form homohexamers. In terms of processing, N-glycosylated. As to expression, ubiquitously expressed. Highest expression in stomach, salivary glands and lymph nodes. Isoform 2 is expressed in placenta.

The protein resides in the cytoplasm. It is found in the endoplasmic reticulum lumen. The protein is Torsin-3A (TOR3A) of Homo sapiens (Human).